The chain runs to 338 residues: Transferrin receptor subunit ESAG7 (338 aa).

Positions 1-17 (MRFWFVLLALLGKEIYA) are cleaved as a signal peptide. N-linked (GlcNAc...) asparagine glycans are attached at residues Asn-26 and Asn-110. 4 disulfide bridges follow: Cys-34/Cys-161, Cys-84/Cys-311, Cys-144/Cys-215, and Cys-230/Cys-247. A glycan (N-linked (GlcNAc...) asparagine) is linked at Asn-234.

Heterodimer composed of ESAG6 and ESAG7. N-glycosylated. Glycosylation is dispensable for heterodimer formation and host transferrin binding.

The protein localises to the cell membrane. It localises to the flagellar pocket. Its function is as follows. Transferrin receptor subunit involved in receptor-mediated acquisition of iron from the environment by binding host TF/transferrin. The sequence is that of Transferrin receptor subunit ESAG7 from Trypanosoma brucei brucei.